The sequence spans 495 residues: Regulator of G-protein signaling 7 (495 aa).

Residues 37 to 112 (EKNGIPIRTV…DDGTFYRFQT (76 aa)) enclose the DEP domain. S229 and S241 each carry phosphoserine. The tract at residues 235-256 (NDIRSHSPTHTPTPETKPPTED) is disordered. T243 bears the Phosphothreonine mark. The region spanning 255-316 (EDELQQQIKY…LSDDTTFWEL (62 aa)) is the G protein gamma domain. The RGS domain occupies 333-448 (GMDEALKDPV…IRSSAYQELL (116 aa)). A Phosphoserine modification is found at S434.

Interacts with GNB5, forming the RGS7-GNB5 complex. Interacts with GPR158; promotes the GTPase activator activity of the RGS7-GNB5 complex in absence of glycine, in contrast GTPase activator activity of the RGS7-GNB5 complex is inhibited in presence of glycine. Interacts with GPR179. Interacts with PKD1; this prevents rapid proteasomal degradation. Interacts with RGS7BP, leading to regulate the subcellular location of the heterodimer formed with GNB5. Interacts (phosphorylated form) with 14-3-3 protein YWHAQ. Interacts with SNAPIN. Interacts with GNAI1. Interacts with GNAO1, GNAI3 and GNAZ. In terms of processing, palmitoylated. Ubiquitinated, leading to rapid proteasomal degradation. Post-translationally, phosphorylation and subsequent interaction with 14-3-3 proteins inhibits GAP activity.

The protein resides in the cytoplasm. Its subcellular location is the cytosol. It is found in the cell membrane. It localises to the membrane. Functionally, GTPase activator component of the RGS7-GNB5 complex that regulates G protein-coupled receptor signaling cascades. The RGS7-GNB5 complex acts as an inhibitor signal transduction by promoting the GTPase activity of G protein alpha subunits, such as GNAO1, thereby driving them into their inactive GDP-bound form. May play a role in synaptic vesicle exocytosis. Glycine-dependent regulation of the RGS7-GNB5 complex by GPR158 affects mood and cognition via its ability to regulate neuronal excitability in L2/L3 pyramidal neurons of the prefrontal cortex. Modulates the activity of potassium channels that are activated by GNAO1 in response to muscarinic acetylcholine receptor M2/CHRM2 signaling. This is Regulator of G-protein signaling 7 (RGS7) from Homo sapiens (Human).